The primary structure comprises 496 residues: Glycine receptor subunit beta (496 aa).

Positions 1 to 22 (MKFSLAVSFFILMSLLFEDACS) are cleaved as a signal peptide. Residues 23–268 (KEKSSKKGKG…IFTLRRQVGF (246 aa)) lie on the Extracellular side of the membrane. Residue N54 is glycosylated (N-linked (GlcNAc...) asparagine). Glycine-binding residues include R108 and S174. The cysteines at positions 183 and 197 are disulfide-linked. A glycan (N-linked (GlcNAc...) asparagine) is linked at N242. A disulfide bridge links C243 with C255. Position 250 (T250) interacts with glycine. A helical transmembrane segment spans residues 269-289 (YMMGVYAPTLLIVVLSWLSFW). The Cytoplasmic segment spans residues 290 to 294 (INPDA). Residues 295–315 (SAARVPLGIFSVLSLASECTT) form a helical membrane-spanning segment. The Extracellular portion of the chain corresponds to 316 to 327 (LAAELPKVSYVK). A helical membrane pass occupies residues 328-349 (ALDVWLIACLLFGFASLVEYAV). The Cytoplasmic segment spans residues 350–471 (VQVMLNNPKR…KPVIPTAAKR (122 aa)). T391 is subject to Phosphothreonine. The chain crosses the membrane as a helical span at residues 472–495 (IDLYARALFPFCFLFFNVIYWSIY). A topological domain (extracellular) is located at residue L496.

It belongs to the ligand-gated ion channel (TC 1.A.9) family. Glycine receptor (TC 1.A.9.3) subfamily. GLRB sub-subfamily. As to quaternary structure, forms heteropentamers with glycin receptor alpha subunits. Heteropentamers with GLRA1 can be composed of two GLRA1 and three GLRB subunits, or three GLRA1 and two GLRB subunits, or four GLRA1 subunits and one GLRB subunit. Forms heteropentamers with GLRA2. Functional GLRB-GLRA2 heteropentamers contain four GLRA2 subunits and one GLRB subunit, although alternative subunit composition cannot be excluded. Forms a heteropentamer with GLRA3. Interacts with GPHN. As to expression, detected in spinal cord and brain stem (at protein level). Detected in spinal cord, cerebellum and brain cortex.

The protein localises to the postsynaptic cell membrane. It localises to the cell membrane. It is found in the synapse. The protein resides in the perikaryon. Its subcellular location is the cell projection. The protein localises to the dendrite. It localises to the cytoplasm. The enzyme catalyses chloride(in) = chloride(out). Channel opening is triggered by extracellular glycine. Heteropentameric channels composed of GLRB and GLRA1 are activated by lower glycine levels than homopentameric GLRA1. Subunit of heteromeric glycine-gated chloride channels. Plays an important role in the down-regulation of neuronal excitability. Contributes to the generation of inhibitory postsynaptic currents. The protein is Glycine receptor subunit beta (Glrb) of Rattus norvegicus (Rat).